We begin with the raw amino-acid sequence, 340 residues long: Ribonucleoside-diphosphate reductase small subunit (340 aa).

Positions 94, 124, and 127 each coordinate Fe cation. Y131 is a catalytic residue. Residues 180-200 (FILMILIEGIFFAASFAAIAY) form a helical membrane-spanning segment. 3 residues coordinate Fe cation: E187, E221, and H224.

The protein belongs to the ribonucleoside diphosphate reductase small chain family. As to quaternary structure, heterotetramer composed of a homodimer of the large subunit (R1) and a homodimer of the small subunit (R2). Larger multisubunit protein complex are also active, composed of (R1)n(R2)n. Fe cation is required as a cofactor.

The protein localises to the host membrane. It catalyses the reaction a 2'-deoxyribonucleoside 5'-diphosphate + [thioredoxin]-disulfide + H2O = a ribonucleoside 5'-diphosphate + [thioredoxin]-dithiol. Its function is as follows. Ribonucleoside-diphosphate reductase holoenzyme provides the precursors necessary for viral DNA synthesis. Allows virus growth in non-dividing cells, as well as reactivation from latency in infected hosts. Catalyzes the biosynthesis of deoxyribonucleotides from the corresponding ribonucleotides. The sequence is that of Ribonucleoside-diphosphate reductase small subunit from Human herpesvirus 1 (strain KOS) (HHV-1).